Reading from the N-terminus, the 570-residue chain is Urease subunit alpha (570 aa).

Residues Gly131–Phe570 enclose the Urease domain. Ni(2+)-binding residues include His136, His138, and Lys219. Position 219 is an N6-carboxylysine (Lys219). His221 serves as a coordination point for substrate. Residues His248 and His274 each coordinate Ni(2+). His322 (proton donor) is an active-site residue. Asp362 contributes to the Ni(2+) binding site.

This sequence belongs to the metallo-dependent hydrolases superfamily. Urease alpha subunit family. As to quaternary structure, heterotrimer of UreA (gamma), UreB (beta) and UreC (alpha) subunits. Three heterotrimers associate to form the active enzyme. Ni cation is required as a cofactor. In terms of processing, carboxylation allows a single lysine to coordinate two nickel ions.

The protein resides in the cytoplasm. It catalyses the reaction urea + 2 H2O + H(+) = hydrogencarbonate + 2 NH4(+). It participates in nitrogen metabolism; urea degradation; CO(2) and NH(3) from urea (urease route): step 1/1. The sequence is that of Urease subunit alpha from Beijerinckia indica subsp. indica (strain ATCC 9039 / DSM 1715 / NCIMB 8712).